Here is a 155-residue protein sequence, read N- to C-terminus: Small ribosomal subunit protein uS7 (155 aa).

The protein belongs to the universal ribosomal protein uS7 family. As to quaternary structure, part of the 30S ribosomal subunit. Contacts proteins S9 and S11.

Its function is as follows. One of the primary rRNA binding proteins, it binds directly to 16S rRNA where it nucleates assembly of the head domain of the 30S subunit. Is located at the subunit interface close to the decoding center, probably blocks exit of the E-site tRNA. The polypeptide is Small ribosomal subunit protein uS7 (Chlorobium phaeobacteroides (strain DSM 266 / SMG 266 / 2430)).